The sequence spans 81 residues: Thrombin-like enzyme collinein-3 (81 aa).

D4 is an active-site residue. A disulfide bridge links C51 with C68.

As to quaternary structure, monomer. As to expression, expressed by the vanom gland.

Its subcellular location is the secreted. Thrombin-like snake venom serine protease. This chain is Thrombin-like enzyme collinein-3, found in Crotalus durissus collilineatus (Brazilian rattlesnake).